The following is a 626-amino-acid chain: MRERSQDSQAGLTLYVGLFGHLGMLHRTKYSRFRNESITSLDEGSPGGSVGNKGSSPPPYPALAPHLPTEDATVSSQESPTALCTLIPRMASMKLANPITFLGLKTFCLGTKQVSRLKLQENQDQTPSRPASPESNLNRTGPAPAPDPDQVGRRPTSLRPDTCPLPGPGEPSPRSKQDGPPLQHLLGNGLNYCVRYMGCIEVLQSMRSLDFGMRTQVTREAISRLCEAVPGAHGAIKKRKAPVKFLTTVLGKSNLQFSGMNIKLTVSTSSLTLMNLDNQQIIANHQMQSISFASGGDPDTTDYVAYVAKDPVNQRACHILECRSGMAQDVISTIGQAFELRFKQYLKNPSLNTWEREEVLVDGAPEDRDHDYYNSIPGKQPPEGGISDVRIQAQATDQMAYCPIRCEKLCYLPGNSTCSGVYKNCMGRSRPIGIPHERAGQGDTPSLRHFWRVDLFDDPCYVNTQALQSMHSYAGNQSSALPQGSPWHLGKAPETVQPGATAKPGSALALPHIRQQLWDEECFHGKLSRGAAEKLLVKDGDFLVRESVTSPGQFVLSGLQGGQAKHLLLVDPEGKVRTKDHVFDNVGHLIKYHMDNNLPIISSGSEVRLKQPIRKYDNTGLLPPKK.

The CH2 stretch occupies residues 1 to 185 (MRERSQDSQA…KQDGPPLQHL (185 aa)). Disordered stretches follow at residues 38-76 (ITSLDEGSPGGSVGNKGSSPPPYPALAPHLPTEDATVSS) and 119-182 (LQEN…GPPL). Polar residues predominate over residues 120–139 (QENQDQTPSRPASPESNLNR). A PID domain is found at 186–369 (LGNGLNYCVR…LVDGAPEDRD (184 aa)). The tract at residues 370–521 (HDYYNSIPGK…HIRQQLWDEE (152 aa)) is CH1. At tyrosine 422 the chain carries Phosphotyrosine. An SH2 domain is found at 522-613 (CFHGKLSRGA…GSEVRLKQPI (92 aa)).

In terms of assembly, interacts (via PID domain) with phosphorylated MUSK (via NPXY motif); undergoes tyrosine phosphorylation downstream of activated MUSK. Interacts with GRB2; the interaction is dependent of Tyr-422 phosphorylation and increased by EGF. Phosphorylated; the phosphorylation is enhanced by EGF. Phosphorylation at Tyr-422 is required for the interaction with GRB2. As to expression, expressed in both brain and skeletal muscle; widely expressed in brain namely olfactory bulb, cortex, hippocampus, striatum, thalamus, and brain stem (at protein level). Only expressed in melanomas. Weakly expressed in normal melanocytes and benign nevi. Highly expressed at the transition from radial growth phase to vertical growth phase and metastatic melanomas, when tumor cells acquire migratory competence and invasive potential.

It localises to the postsynaptic cell membrane. Its function is as follows. Activates both Ras-dependent and Ras-independent migratory pathways in melanomas. Contributes to the early phases of agrin-induced tyrosine phosphorylation of CHRNB1. This chain is SHC-transforming protein 4 (Shc4), found in Mus musculus (Mouse).